The chain runs to 657 residues: UvrABC system protein B (657 aa).

The region spanning 24–409 (AGVRNQVKSQ…SGHIVQQIIR (386 aa)) is the Helicase ATP-binding domain. 37 to 44 (GTTGSGKT) contributes to the ATP binding site. A Beta-hairpin motif is present at residues 90–113 (YYDYYQPEAYIARSDTYIEKSLLI). The Helicase C-terminal domain occupies 426-589 (QVDDLLEEIR…IVPKPIIKAI (164 aa)). Residues 617–652 (EEQIKKYEALMQRAAKEFRFNEAAKYRDAMQACKEQ) form the UVR domain.

The protein belongs to the UvrB family. In terms of assembly, forms a heterotetramer with UvrA during the search for lesions. Interacts with UvrC in an incision complex.

The protein localises to the cytoplasm. In terms of biological role, the UvrABC repair system catalyzes the recognition and processing of DNA lesions. A damage recognition complex composed of 2 UvrA and 2 UvrB subunits scans DNA for abnormalities. Upon binding of the UvrA(2)B(2) complex to a putative damaged site, the DNA wraps around one UvrB monomer. DNA wrap is dependent on ATP binding by UvrB and probably causes local melting of the DNA helix, facilitating insertion of UvrB beta-hairpin between the DNA strands. Then UvrB probes one DNA strand for the presence of a lesion. If a lesion is found the UvrA subunits dissociate and the UvrB-DNA preincision complex is formed. This complex is subsequently bound by UvrC and the second UvrB is released. If no lesion is found, the DNA wraps around the other UvrB subunit that will check the other stand for damage. The chain is UvrABC system protein B from Chlamydia pneumoniae (Chlamydophila pneumoniae).